Reading from the N-terminus, the 342-residue chain is Aquaporin-7 (342 aa).

At 1–36 the chain is on the cytoplasmic side; sequence MVQTSRHRRSTRGSKMVSWSVMAKIQEILQKKMVRE. A Phosphoserine modification is found at serine 20. A helical transmembrane segment spans residues 37 to 54; that stretch reads FLAEFMSTYVMMVFGLGS. Residues 55–67 lie on the Extracellular side of the membrane; that stretch reads VAHMVLNKKYGSY. Residues 68–85 traverse the membrane as a helical segment; that stretch reads LGVNLGFGFGVTMGVHVA. The Cytoplasmic segment spans residues 86 to 89; sequence GHIS. Residues 90 to 103 constitute an intramembrane region (discontinuously helical); the sequence is GAHMNAAVTFANCA. The short motif at 94-96 is the NPA 1 element; the sequence is NAA. Residues 104–111 lie on the Cytoplasmic side of the membrane; sequence LGRVPWRK. A helical membrane pass occupies residues 112–132; sequence FPVYVLGQFLGSFLAAATIYT. Residues 133–167 are Extracellular-facing; the sequence is LFYTAILHFSGGQLMVTGPVATAGIFATYLPDHMT. Residues 168 to 188 traverse the membrane as a helical segment; it reads LWRGFLNEAWLTGMLQLCLFA. The Cytoplasmic segment spans residues 189–200; sequence ITDQENNAALPG. A helical membrane pass occupies residues 201–217; sequence TQALVIGILVVIIGVSL. Residues 218 to 221 lie on the Extracellular side of the membrane; it reads GMNT. Residues 222 to 235 constitute an intramembrane region (discontinuously helical); it reads GYAINPSRDLPPRV. An NPA 2 motif is present at residues 226–228; the sequence is NPS. At 236–253 the chain is on the extracellular side; the sequence is FTFIAGWGKEVFSEGENW. The helical transmembrane segment at 254-275 threads the bilayer; that stretch reads WWVPVVAPLLGACLGGIIYLVF. Over 276–342 the chain is Cytoplasmic; sequence IGSTTPREPL…LHESMALGHF (67 aa).

Belongs to the MIP/aquaporin (TC 1.A.8) family. In terms of assembly, homotetramer; each monomer provides an independent glycerol/water pore. Two homotetramers on opposing membranes can dimerize, forming a cell-cell junction. Interacts with PLIN1. Phosphorylation by PKA could prevent the interaction with PLIN1.

It is found in the cell membrane. The protein localises to the cytoplasmic vesicle membrane. It localises to the lipid droplet. It catalyses the reaction glycerol(in) = glycerol(out). The enzyme catalyses H2O(in) = H2O(out). It carries out the reaction urea(in) = urea(out). Its activity is regulated as follows. Glycerol transport is regulated by pH, with the porin being permeable to glycerol at pH 7.4 but not at pH 5.5. Water permeability, however, is not influenced by pH. Aquaglyceroporins form homotetrameric transmembrane channels, with each monomer independently mediating glycerol and water transport across the plasma membrane along their osmotic gradient. Could also be permeable to urea. Mediates the efflux of glycerol, formed upon triglyceride hydrolysis, to avoid its accumulation in adipocytes and to make it available to other tissues. In the kidney, mediates the reabsorption of glycerol, preventing its loss in urine, again participating to energy homeostasis. In pancreatic beta cells, it also mediates the efflux of glycerol, regulating its intracellular levels. This Macaca fascicularis (Crab-eating macaque) protein is Aquaporin-7 (AQP7).